The chain runs to 231 residues: Two-component response regulator ORR1 (231 aa).

Positions 9–135 (RVLLVDDSPV…DVQRLRNCSP (127 aa)) constitute a Response regulatory domain. D68 is subject to 4-aspartylphosphate.

This sequence belongs to the ARR family. Type-A subfamily. In terms of processing, two-component system major event consists of a His-to-Asp phosphorelay between a sensor histidine kinase (HK) and a response regulator (RR). In plants, the His-to-Asp phosphorelay involves an additional intermediate named Histidine-containing phosphotransfer protein (HPt). This multistep phosphorelay consists of a His-Asp-His-Asp sequential transfer of a phosphate group between first a His and an Asp of the HK protein, followed by the transfer to a conserved His of the HPt protein and finally the transfer to an Asp in the receiver domain of the RR protein. As to expression, expressed in roots, leaf blades, leaf sheaths, shoot apex, flowers and panicles.

Functionally, functions as a response regulator involved in His-to-Asp phosphorelay signal transduction system. Phosphorylation of the Asp residue in the receiver domain activates the ability of the protein to promote the transcription of target genes. Type-A response regulators seem to act as negative regulators of the cytokinin signaling. Involved in adventitious (crown) root initiation under the regulation of CRL5. The chain is Two-component response regulator ORR1 from Oryza sativa subsp. japonica (Rice).